The chain runs to 201 residues: MQTSPLLTQLMEALRCLPGVGPKSAQRMAFTLLQRDRSGGMRLAQALTRAMAEIGHCADCRTFTEQEVCNICANPRRQENGQICVVESPADIYAIEQTGQFSGRYFVLMGHLSPLDGIGPDDIGLDRLEQRLVSEKISELILATNPTVEGEATANYIAELCAQYGVEASRIAHGVPVGGELEMVDGTTLSHSLAGRHKIIL.

The C4-type zinc finger occupies 57 to 72 (CADCRTFTEQEVCNIC). Residues 81–176 (GQICVVESPA…EASRIAHGVP (96 aa)) form the Toprim domain.

The protein belongs to the RecR family.

In terms of biological role, may play a role in DNA repair. It seems to be involved in an RecBC-independent recombinational process of DNA repair. It may act with RecF and RecO. The sequence is that of Recombination protein RecR from Salmonella arizonae (strain ATCC BAA-731 / CDC346-86 / RSK2980).